Here is a 294-residue protein sequence, read N- to C-terminus: tRNA dimethylallyltransferase (294 aa).

10–17 (GPTAVGKT) serves as a coordination point for ATP. 12–17 (TAVGKT) contacts substrate. An interaction with substrate tRNA region spans residues 35–38 (DSQQ).

Belongs to the IPP transferase family. As to quaternary structure, monomer. It depends on Mg(2+) as a cofactor.

It carries out the reaction adenosine(37) in tRNA + dimethylallyl diphosphate = N(6)-dimethylallyladenosine(37) in tRNA + diphosphate. In terms of biological role, catalyzes the transfer of a dimethylallyl group onto the adenine at position 37 in tRNAs that read codons beginning with uridine, leading to the formation of N6-(dimethylallyl)adenosine (i(6)A). The chain is tRNA dimethylallyltransferase from Streptococcus mutans serotype c (strain ATCC 700610 / UA159).